The following is a 56-amino-acid chain: Large ribosomal subunit protein bL33c (56 aa).

This sequence belongs to the bacterial ribosomal protein bL33 family.

The protein resides in the plastid. The protein localises to the chloroplast. The protein is Large ribosomal subunit protein bL33c (rpl33) of Guillardia theta (Cryptophyte).